Here is a 93-residue protein sequence, read N- to C-terminus: Large ribosomal subunit protein eL37A (93 aa).

Cys-19, Cys-22, Cys-34, and Cys-37 together coordinate Zn(2+). Residues 19-37 (CRRCGRSSYHIQKSTCAQC) form a C4-type zinc finger.

The protein belongs to the eukaryotic ribosomal protein eL37 family. Requires Zn(2+) as cofactor.

Its function is as follows. Binds to the 23S rRNA. The polypeptide is Large ribosomal subunit protein eL37A (Drosophila melanogaster (Fruit fly)).